Reading from the N-terminus, the 258-residue chain is Phosphate import ATP-binding protein PstB (258 aa).

Residues 12 to 253 (LEVKNLNFYY…PARKETEDYI (242 aa)) form the ABC transporter domain. 44–51 (GPSGCGKS) contributes to the ATP binding site.

It belongs to the ABC transporter superfamily. Phosphate importer (TC 3.A.1.7) family. The complex is composed of two ATP-binding proteins (PstB), two transmembrane proteins (PstC and PstA) and a solute-binding protein (PstS).

Its subcellular location is the cell inner membrane. The enzyme catalyses phosphate(out) + ATP + H2O = ADP + 2 phosphate(in) + H(+). Part of the ABC transporter complex PstSACB involved in phosphate import. Responsible for energy coupling to the transport system. The chain is Phosphate import ATP-binding protein PstB from Bordetella parapertussis (strain 12822 / ATCC BAA-587 / NCTC 13253).